The chain runs to 382 residues: MRSLAILGSTGSIGLSTLDVVRQHPEKFKIAGLAEGHDVALLAEQIKEFLPAAVSVRDADSVKKLQTLLGSHKPEIFHGLEGAAAIASAEGVDMVVSAIVGAAGLLPTVSAIKAGKHIALANKETLVVAGKLVSDLVKKHNVHLLPVDSEHSAIFQSLAGHRAEDVERIILTASGGPFRNTSAEELKNVTLEQALKHPQWTMGAKITIDSATMMNKGLEVIEAHWLFSMPAEKIGVVVHPQSIIHSMVEYIDGCVIAQLGSPDMRAPIAYALSWPERSESGIHKLDLPKIGTLTFEEPDMERFPALRLAFEALKAGLTYPAVLNAANEIAVAAFLDRKIGFTDIAATVEKTMQAHEAYDPIELDEYLQADRWAREMAKKFIA.

The NADPH site is built by T10, G11, S12, I13, G36, and N122. K123 is a binding site for 1-deoxy-D-xylulose 5-phosphate. NADPH is bound at residue E124. Residue D148 coordinates Mn(2+). Residues S149, E150, S174, and H197 each coordinate 1-deoxy-D-xylulose 5-phosphate. E150 contacts Mn(2+). G203 lines the NADPH pocket. 4 residues coordinate 1-deoxy-D-xylulose 5-phosphate: S210, N215, K216, and E219. E219 is a Mn(2+) binding site.

It belongs to the DXR family. It depends on Mg(2+) as a cofactor. Mn(2+) serves as cofactor.

The catalysed reaction is 2-C-methyl-D-erythritol 4-phosphate + NADP(+) = 1-deoxy-D-xylulose 5-phosphate + NADPH + H(+). The protein operates within isoprenoid biosynthesis; isopentenyl diphosphate biosynthesis via DXP pathway; isopentenyl diphosphate from 1-deoxy-D-xylulose 5-phosphate: step 1/6. Functionally, catalyzes the NADPH-dependent rearrangement and reduction of 1-deoxy-D-xylulose-5-phosphate (DXP) to 2-C-methyl-D-erythritol 4-phosphate (MEP). The chain is 1-deoxy-D-xylulose 5-phosphate reductoisomerase from Pelodictyon phaeoclathratiforme (strain DSM 5477 / BU-1).